We begin with the raw amino-acid sequence, 593 residues long: UvrABC system protein C (593 aa).

A GIY-YIG domain is found at 14 to 91 (DSPGCYLHKD…IQENMPKYNI (78 aa)). A UVR domain is found at 196–231 (NKIVNGLTEKMKSAAMTMEFERAAEYRDLIEAISLL).

This sequence belongs to the UvrC family. As to quaternary structure, interacts with UvrB in an incision complex.

The protein localises to the cytoplasm. Functionally, the UvrABC repair system catalyzes the recognition and processing of DNA lesions. UvrC both incises the 5' and 3' sides of the lesion. The N-terminal half is responsible for the 3' incision and the C-terminal half is responsible for the 5' incision. The polypeptide is UvrABC system protein C (Streptococcus agalactiae serotype III (strain NEM316)).